The chain runs to 129 residues: Small ribosomal subunit protein bS6 (129 aa).

Over residues 110-121 (FVRRDDERREDT) the composition is skewed to basic and acidic residues. The segment at 110-129 (FVRRDDERREDTVEAASSEE) is disordered.

The protein belongs to the bacterial ribosomal protein bS6 family.

Binds together with bS18 to 16S ribosomal RNA. The polypeptide is Small ribosomal subunit protein bS6 (Aeromonas salmonicida (strain A449)).